The following is a 1012-amino-acid chain: 5'-3' exoribonuclease 2 (1012 aa).

The segment at 264–281 (GKCFLCGQEGHRAADCEG) adopts a CCHC-type zinc-finger fold. 3 disordered regions span residues 411 to 439 (VQQR…AQAS), 888 to 976 (TFKD…QRQV), and 990 to 1012 (QRKK…PKTA). Positions 415–433 (QSERFRRDKARDKARDNAR) are enriched in basic and acidic residues. Residues 904–914 (ITPKKMNSPQR) are compositionally biased toward polar residues. 2 stretches are compositionally biased toward basic and acidic residues: residues 918–928 (WKKDETPQSRE) and 950–962 (PQRE…KKEN). Positions 990–1002 (QRKKEKYLRKKAK) are enriched in basic residues.

This sequence belongs to the 5'-3' exonuclease family. XRN2/RAT1 subfamily. In terms of tissue distribution, expressed in roots, leaves, stems and flowers.

The protein resides in the nucleus. Possesses 5'-&gt;3' exoribonuclease activity. Acts as an endogenous post-transcriptional gene silencing (PTGS) suppressor. Degrades miRNA-derived loops, excised during miRNA maturation in the nucleus. Involved in pre-rRNA processing. Involved in the primary exonucleolytic shortening of the 5' external transcribed spacer (5'ETS), required for endonucleolytic processing at site P by the U3 snoRNP complex. Involved with XRN3 in the 5'-end processing of 5.8S and 25S rRNAs. Contributes with XRN3 to polyadenylation-dependent nuclear RNA surveillance. Involved in the degradation of aberrant polyadenylated pre-rRNA through 5'-end processing. This chain is 5'-3' exoribonuclease 2, found in Arabidopsis thaliana (Mouse-ear cress).